The chain runs to 737 residues: Catalase-peroxidase (737 aa).

Residues 1–23 form the signal peptide; the sequence is MLKKILPVLITLAIVHNTPTAWA. Positions 102-223 form a cross-link, tryptophyl-tyrosyl-methioninium (Trp-Tyr) (with M-249); the sequence is WHGAGTYRIY…LAATQMGLIY (122 aa). Catalysis depends on His103, which acts as the Proton acceptor. The segment at residues 223–249 is a cross-link (tryptophyl-tyrosyl-methioninium (Tyr-Met) (with W-102)); the sequence is YVNPEGPNGKPDPVAAAKDIREAFARM. His264 is a heme b binding site.

This sequence belongs to the peroxidase family. Peroxidase/catalase subfamily. As to quaternary structure, homodimer or homotetramer. The cofactor is heme b. In terms of processing, formation of the three residue Trp-Tyr-Met cross-link is important for the catalase, but not the peroxidase activity of the enzyme.

It catalyses the reaction H2O2 + AH2 = A + 2 H2O. The enzyme catalyses 2 H2O2 = O2 + 2 H2O. Its function is as follows. Bifunctional enzyme with both catalase and broad-spectrum peroxidase activity. The sequence is that of Catalase-peroxidase from Yersinia pseudotuberculosis serotype O:3 (strain YPIII).